Here is a 269-residue protein sequence, read N- to C-terminus: Formamidopyrimidine-DNA glycosylase (269 aa).

P2 functions as the Schiff-base intermediate with DNA in the catalytic mechanism. E3 acts as the Proton donor in catalysis. K57 functions as the Proton donor; for beta-elimination activity in the catalytic mechanism. Positions 90, 109, and 150 each coordinate DNA. The segment at 235-269 (QVYGRAGEPCRQCGHPIEIAKHGQRSTFFCRHCQH) adopts an FPG-type zinc-finger fold. The Proton donor; for delta-elimination activity role is filled by R259.

It belongs to the FPG family. As to quaternary structure, monomer. Zn(2+) serves as cofactor.

It carries out the reaction Hydrolysis of DNA containing ring-opened 7-methylguanine residues, releasing 2,6-diamino-4-hydroxy-5-(N-methyl)formamidopyrimidine.. The catalysed reaction is 2'-deoxyribonucleotide-(2'-deoxyribose 5'-phosphate)-2'-deoxyribonucleotide-DNA = a 3'-end 2'-deoxyribonucleotide-(2,3-dehydro-2,3-deoxyribose 5'-phosphate)-DNA + a 5'-end 5'-phospho-2'-deoxyribonucleoside-DNA + H(+). Its function is as follows. Involved in base excision repair of DNA damaged by oxidation or by mutagenic agents. Acts as a DNA glycosylase that recognizes and removes damaged bases. Has a preference for oxidized purines, such as 7,8-dihydro-8-oxoguanine (8-oxoG). Has AP (apurinic/apyrimidinic) lyase activity and introduces nicks in the DNA strand. Cleaves the DNA backbone by beta-delta elimination to generate a single-strand break at the site of the removed base with both 3'- and 5'-phosphates. This Yersinia pseudotuberculosis serotype O:1b (strain IP 31758) protein is Formamidopyrimidine-DNA glycosylase.